Consider the following 501-residue polypeptide: ATP synthase subunit alpha (501 aa).

Residue 169-176 (GDRQTGKT) coordinates ATP.

This sequence belongs to the ATPase alpha/beta chains family. F-type ATPases have 2 components, CF(1) - the catalytic core - and CF(0) - the membrane proton channel. CF(1) has five subunits: alpha(3), beta(3), gamma(1), delta(1), epsilon(1). CF(0) has three main subunits: a(1), b(2) and c(9-12). The alpha and beta chains form an alternating ring which encloses part of the gamma chain. CF(1) is attached to CF(0) by a central stalk formed by the gamma and epsilon chains, while a peripheral stalk is formed by the delta and b chains.

Its subcellular location is the cell membrane. It carries out the reaction ATP + H2O + 4 H(+)(in) = ADP + phosphate + 5 H(+)(out). Functionally, produces ATP from ADP in the presence of a proton gradient across the membrane. The alpha chain is a regulatory subunit. This is ATP synthase subunit alpha from Streptococcus agalactiae serotype III (strain NEM316).